The following is a 157-amino-acid chain: Cyclic pyranopterin monophosphate synthase (157 aa).

Residues 74-76 (MCH) and 112-113 (ME) contribute to the substrate site. Asp127 is a catalytic residue.

This sequence belongs to the MoaC family. Homohexamer; trimer of dimers.

It catalyses the reaction (8S)-3',8-cyclo-7,8-dihydroguanosine 5'-triphosphate = cyclic pyranopterin phosphate + diphosphate. It participates in cofactor biosynthesis; molybdopterin biosynthesis. Its function is as follows. Catalyzes the conversion of (8S)-3',8-cyclo-7,8-dihydroguanosine 5'-triphosphate to cyclic pyranopterin monophosphate (cPMP). The protein is Cyclic pyranopterin monophosphate synthase of Campylobacter lari (strain RM2100 / D67 / ATCC BAA-1060).